Reading from the N-terminus, the 103-residue chain is Small ribosomal subunit protein uS10 (103 aa).

The protein belongs to the universal ribosomal protein uS10 family. In terms of assembly, part of the 30S ribosomal subunit.

Functionally, involved in the binding of tRNA to the ribosomes. In Chlorobium limicola (strain DSM 245 / NBRC 103803 / 6330), this protein is Small ribosomal subunit protein uS10.